The primary structure comprises 360 residues: N-acetylmuramoyl-L-alanine amidase CwlL (360 aa).

The signal sequence occupies residues 1-39; the sequence is MVKVVKNFVKVNQYTRPGLKLAGVKGIVMHYTATPGASA. The N-acetylmuramoyl-L-alanine amidase domain maps to 40 to 154; sequence LNERDYFNGT…DVTNKICPAP (115 aa). 4 consecutive repeat copies span residues 166-191, 196-259, 265-289, and 291-355. 2 X approximate repeats regions lie at residues 166–289 and 196–355; these read RKKV…KVKS and LKKG…KAKL.

It belongs to the N-acetylmuramoyl-L-alanine amidase 2 family.

It is found in the secreted. The catalysed reaction is Hydrolyzes the link between N-acetylmuramoyl residues and L-amino acid residues in certain cell-wall glycopeptides.. This Bacillus licheniformis protein is N-acetylmuramoyl-L-alanine amidase CwlL (cwlL).